Reading from the N-terminus, the 63-residue chain is Large ribosomal subunit protein bL32 (63 aa).

A compositionally biased stretch (basic residues) spans 1-18; it reads MAHPKAKVSKSRRDKRRA. The disordered stretch occupies residues 1–25; that stretch reads MAHPKAKVSKSRRDKRRAQFNARTK.

It belongs to the bacterial ribosomal protein bL32 family.

This is Large ribosomal subunit protein bL32 from Chlorobium phaeovibrioides (strain DSM 265 / 1930) (Prosthecochloris vibrioformis (strain DSM 265)).